The sequence spans 152 residues: MDRGELSRVFQMFDKNGDGKIAKNELKDFFKSVGIMVPENEINEMIAKMDVNGDGAMDIDEFGSLYQEMVEEKEEEEDMREAFRVFDQNGDGFITDEELRSVLASMGLKQGRTLEDCKKMISKVDVDGDGMVNFKEFKQMMRGGGFAALSSN.

EF-hand domains follow at residues 1 to 36, 37 to 72, 74 to 109, and 112 to 147; these read MDRG…VGIM, VPEN…MVEE, EEEE…MGLK, and RTLE…GGFA. Residues D14, N16, D18, K20, E25, D50, N52, D54, E61, D87, N89, D91, E98, D125, D127, D129, M131, and E136 each contribute to the Ca(2+) site.

It belongs to the calmodulin family.

Potential calcium sensor that is required for pollen tube attraction for ovule fertilization. This is Calmodulin-like protein 2 (CML2) from Arabidopsis thaliana (Mouse-ear cress).